Here is a 681-residue protein sequence, read N- to C-terminus: Transferrin (681 aa).

The signal sequence occupies residues 1–18; sequence MALKLLTLIALTCAAANA. 2 Transferrin-like domains span residues 23-364 and 371-676; these read YKLC…ERGH and VRLC…DVIS. 2 disulfide bridges follow: C26/C60 and C35/C51. Residues D75 and Y108 each contribute to the Fe(3+) site. 4 disulfide bridges follow: C132–C228, C181–C207, C204–C213, and C271–C284. Residues T134, R138, V140, and G141 each contribute to the hydrogencarbonate site. Residue N218 is glycosylated (N-linked (GlcNAc...) asparagine). Position 222 (Y222) interacts with Fe(3+). N355 carries N-linked (GlcNAc...) asparagine glycosylation. 2 disulfides stabilise this stretch: C374/C411 and C384/C402. N-linked (GlcNAc...) asparagine glycosylation occurs at N418. Intrachain disulfides connect C478/C551, C506/C678, and C579/C596.

The protein belongs to the transferrin family.

The protein localises to the secreted. Functionally, transferrins are iron binding transport proteins which bind Fe(3+) ion in association with the binding of an anion, usually bicarbonate. This transferrin binds only one Fe(3+) ion per protein molecule. In Manduca sexta (Tobacco hawkmoth), this protein is Transferrin.